The sequence spans 214 residues: MNNLKRFTKSIFSCIALSGLLFLGGCETLPPTTDLSPITVDNAAQAKAWELQGKLAIRTPEDKLSANLYWRHSEERDELTLTTMLGTTVLTLDATPNSAHLHVDGKDFRDSNAQALLERVSGWSIPINDLPLWITGQIGALDRVLAVDSNGKTKQIQNSQTLPPWDVTFLSWQPQSGAEVPYQLKLERGDLQLKLQLNQWQALGKPSIMLGEKP.

An N-terminal signal peptide occupies residues methionine 1 to glycine 25. Cysteine 26 carries the N-palmitoyl cysteine lipid modification. The S-diacylglycerol cysteine moiety is linked to residue cysteine 26.

It belongs to the LolB family. As to quaternary structure, monomer.

It localises to the cell outer membrane. Its function is as follows. Plays a critical role in the incorporation of lipoproteins in the outer membrane after they are released by the LolA protein. The protein is Outer-membrane lipoprotein LolB of Shewanella sp. (strain MR-4).